Reading from the N-terminus, the 510-residue chain is MGSEALVHVFLVSFPGQGHVNPLLRLGKRLAAKGLLVTFSTPESIGKQMRKASNITDEPAPVGEGFIRFEFFEDGWDEDEPRRQDLDQYLPQLELIGKDIIPKMIRKNAEMGRPVSCLINNPFIPWVSDVAESLGLPSAMLWVQSCACFCAYYHYYHGLVPFPSEAEPFIDIQLPCMPLLKYDETPSFLYPTTPYPFLRRAILGQYGNLDKPFCILMDTFQELEHEVIEFMSKICPIKTVGPLFKNPKAPNSVRGDFMKADDCLEWLDSKPPQSVVYISFGSVVYLTQKQVDEIAFGLLQSGVSFLWVMKPPHKDAGLELLVLPDGFLEKAGDNGRVVQWSPQEQVLAHPSVACFVTHCGWNSTMESLTSGMPVVAFPQWGDQVTDAVYLVDVFKTGVRMCRGEAENRVITRDEVEKCLLEATVGPKAVEMKQNASKWKAAAEAAFSEGGSSDRNIQAFVDEVRARSVAITGKSTANGVALDLAEKSAEINGKVDLVETKTNGKVELVEA.

Residue H19 is the Proton acceptor of the active site. An an anthocyanidin-binding site is contributed by H19. Q343, H358, W361, N362, S363, and E366 together coordinate UDP-alpha-D-glucose. G381 contacts an anthocyanidin. 2 residues coordinate UDP-alpha-D-glucose: D382 and Q383.

This sequence belongs to the UDP-glycosyltransferase family. In terms of tissue distribution, expressed in swelling buds and young leaves.

The catalysed reaction is 3,4,5-trihydroxybenzoate + UDP-alpha-D-glucose = 1-O-galloyl-beta-D-glucose + UDP. The enzyme catalyses vanillate + UDP-alpha-D-glucose = 1-O-(4-hydroxy-3-methoxybenzoyl)-beta-D-glucose + UDP. It carries out the reaction 3,4-dihydroxybenzoate + UDP-alpha-D-glucose = 1-O-(3,4-dihydroxy-benzoyl)-beta-D-glucose + UDP. Functionally, glucosyltransferase that catalyzes the formation of 1-O-beta-D-glucose esters with hydroxybenzoic acids as preferred glucosyl acceptors. Has the highest activity with 3,4-dihydroxybenzoate, vanillate and gallate in vitro. Gallate is the predicted native substrate of the enzyme, which thus catalyzes the formation of 1-O-galloyl-beta-D-glucose, the first committed step of gallotannin biosynthesis. This is Gallate 1-beta-glucosyltransferase from Quercus robur (English oak).